We begin with the raw amino-acid sequence, 144 residues long: Large ribosomal subunit protein uL13 (144 aa).

Belongs to the universal ribosomal protein uL13 family. In terms of assembly, part of the 50S ribosomal subunit.

This protein is one of the early assembly proteins of the 50S ribosomal subunit, although it is not seen to bind rRNA by itself. It is important during the early stages of 50S assembly. This is Large ribosomal subunit protein uL13 from Clostridium botulinum (strain Alaska E43 / Type E3).